Reading from the N-terminus, the 333-residue chain is CMP-N-acetylneuraminate-beta-galactosamide-alpha-2,3-sialyltransferase 4 (333 aa).

The Cytoplasmic segment spans residues 1–8; that stretch reads MTSKSHWK. A helical; Signal-anchor for type II membrane protein transmembrane segment spans residues 9-26; the sequence is LLALALVLVVVMVWYSIS. At 27-333 the chain is on the lumenal side; the sequence is REDRYIEFFY…MGAVKNLTYF (307 aa). Asn-61, Asn-131, Asn-310, and Asn-329 each carry an N-linked (GlcNAc...) asparagine glycan. Cysteines 120 and 273 form a disulfide.

Belongs to the glycosyltransferase 29 family. In terms of tissue distribution, broadly expressed among tissues with highest levels in the small intestine and colon.

The protein resides in the golgi apparatus. Its subcellular location is the golgi stack membrane. The enzyme catalyses a beta-D-galactosyl-(1-&gt;3)-N-acetyl-beta-D-galactosaminyl derivative + CMP-N-acetyl-beta-neuraminate = an N-acetyl-alpha-neuraminyl-(2-&gt;3)-beta-D-galactosyl-(1-&gt;3)-N-acetyl-beta-D-galactosaminyl derivative + CMP + H(+). It carries out the reaction a beta-D-galactosyl-(1-&gt;3)-N-acetyl-alpha-D-galactosaminyl derivative + CMP-N-acetyl-beta-neuraminate = an N-acetyl-alpha-neuraminyl-(2-&gt;3)-beta-D-galactosyl-(1-&gt;3)-N-acetyl-alpha-D-galactosaminyl derivative + CMP + H(+). It catalyses the reaction a beta-D-galactosyl-(1-&gt;4)-N-acetyl-beta-D-glucosaminyl derivative + CMP-N-acetyl-beta-neuraminate = an N-acetyl-alpha-neuraminyl-(2-&gt;3)-beta-D-galactosyl-(1-&gt;4)-N-acetyl-beta-D-glucosaminyl derivative + CMP + H(+). The catalysed reaction is a ganglioside GM1 (d18:1(4E)) + CMP-N-acetyl-beta-neuraminate = a ganglioside GD1a (d18:1(4E)) + CMP + H(+). The enzyme catalyses a ganglioside GA1 (d18:1(4E)) + CMP-N-acetyl-beta-neuraminate = a ganglioside GM1b (d18:1(4E)) + CMP + H(+). It carries out the reaction a ganglioside GT1c (d18:1(4E)) + CMP-N-acetyl-beta-neuraminate = a ganglioside GQ1c (d18:1(4E)) + CMP + H(+). It catalyses the reaction a neolactoside nLc4Cer + CMP-N-acetyl-beta-neuraminate = a neolactoside IV(3)-alpha-NeuAc-nLc4Cer + CMP + H(+). The catalysed reaction is a neolactoside nLc4Cer(d18:1(4E)) + CMP-N-acetyl-beta-neuraminate = a neolactoside IV(3)-alpha-NeuAc-nLc4Cer(d18:1(4E)) + CMP + H(+). It functions in the pathway protein modification; protein glycosylation. Its function is as follows. A beta-galactoside alpha2-3 sialyltransferase involved in terminal sialylation of glycoproteins and glycolipids. Catalyzes the transfer of sialic acid (N-acetyl-neuraminic acid; Neu5Ac) from the nucleotide sugar donor CMP-Neu5Ac onto acceptor Galbeta-(1-&gt;3)-GalNAc- and Galbeta-(1-&gt;4)-GlcNAc-terminated glycoconjugates through an alpha2-3 linkage. Plays a major role in hemostasis. Responsible for sialylation of plasma VWF/von Willebrand factor, preventing its recognition by asialoglycoprotein receptors (ASGPR) and subsequent clearance. Regulates ASGPR-mediated clearance of platelets. Participates in the biosynthesis of the sialyl Lewis X epitopes, both on O- and N-glycans, which are recognized by SELE/E-selectin, SELP/P-selectin and SELL/L-selectin. Essential for selectin-mediated rolling and adhesion of leukocytes during extravasation. Contributes to adhesion and transendothelial migration of neutrophils likely through terminal sialylation of CXCR2. In glycosphingolipid biosynthesis, sialylates GM1 and GA1 gangliosides to form GD1a and GM1b, respectively. Metabolizes brain c-series ganglioside GT1c forming GQ1c. Synthesizes ganglioside LM1 (IV3Neu5Ac-nLc4Cer), a major structural component of peripheral nerve myelin. The protein is CMP-N-acetylneuraminate-beta-galactosamide-alpha-2,3-sialyltransferase 4 (St3gal4) of Mus musculus (Mouse).